The sequence spans 442 residues: Histidine--tRNA ligase (442 aa).

Belongs to the class-II aminoacyl-tRNA synthetase family. Homodimer.

It localises to the cytoplasm. The enzyme catalyses tRNA(His) + L-histidine + ATP = L-histidyl-tRNA(His) + AMP + diphosphate + H(+). The sequence is that of Histidine--tRNA ligase from Helicobacter pylori (strain HPAG1).